The chain runs to 97 residues: Protein RnfH (97 aa).

This sequence belongs to the UPF0125 (RnfH) family.

This chain is Protein RnfH, found in Halorhodospira halophila (strain DSM 244 / SL1) (Ectothiorhodospira halophila (strain DSM 244 / SL1)).